The chain runs to 473 residues: Membrane protein TMS1 (473 aa).

At 1–6 (MGAVIS) the chain is on the cytoplasmic side. A helical transmembrane segment spans residues 7–29 (LPVSMAGSFVASCFGGCCSNLVT). Over 30 to 38 (KTASSLGSS) the chain is Vacuolar. The chain crosses the membrane as a helical span at residues 39–61 (SLGTRLLYAVWLLLNSLISWVSY). At 62 to 81 (SANKSILWPGKTCTGTGECG) the chain is on the cytoplasmic side. Residues 82–104 (FFTVHRLNFALGCLHLILALVLT) traverse the membrane as a helical segment. At 105–118 (GVKSTNDVRAALQN) the chain is on the vacuolar side. A helical transmembrane segment spans residues 119-138 (SWWSLKFILYLCLIVLSFVI). Residues 139-144 (PNDFYI) lie on the Cytoplasmic side of the membrane. A helical membrane pass occupies residues 145–167 (FFSKWVSVPSGAIFILVGLILLV). Over 168–194 (DFAHEWAETCISHVESEDEDSSFWQRF) the chain is Vacuolar. A helical membrane pass occupies residues 195–217 (LVLGTTSMYTASIIMTVVMYVMF). Over 218 to 228 (CHQQCNMNQTA) the chain is Cytoplasmic. The helical transmembrane segment at 229–246 (VTVNLILTVITLVLSVNP) threads the bilayer. Residues 247–295 (KIQEANPKSGLAQSSMVSVYCTYLTMSAMSSEPDDKMCNPLVRSSGTRK) are Vacuolar-facing. Residues 296-318 (FSIILGSLFTFIAIAYTTTRAAA) form a helical membrane-spanning segment. Residues 319 to 398 (NSAFQGTNTN…DDERTGTKYN (80 aa)) are Cytoplasmic-facing. The chain crosses the membrane as a helical span at residues 399–421 (YTLFHVIFFLATQWIAILLTINV). Residues 422–435 (TQDDVGDFIPVGRT) are Vacuolar-facing. A helical transmembrane segment spans residues 436–458 (YFYSWVKIVSAWICYALYGWTVV). The Cytoplasmic segment spans residues 459-473 (APAIMPDRFDYENYY).

It belongs to the TDE1 family.

The protein resides in the membrane. The chain is Membrane protein TMS1 (TMS1) from Saccharomyces cerevisiae (strain ATCC 204508 / S288c) (Baker's yeast).